Consider the following 347-residue polypeptide: Malate dehydrogenase, mitochondrial (347 aa).

Residues 1–27 (MKASILRSVRSAVSRSSSSNRLLSRSF) constitute a mitochondrion transit peptide. NAD(+) contacts are provided by residues 41-47 (GAAGGIG) and aspartate 67. Arginine 114 and arginine 120 together coordinate substrate. NAD(+)-binding positions include asparagine 127 and 150-152 (ISN). 2 residues coordinate substrate: asparagine 152 and arginine 186. The Proton acceptor role is filled by histidine 210. Methionine 261 lines the NAD(+) pocket.

Belongs to the LDH/MDH superfamily. MDH type 1 family. In terms of assembly, homodimer.

The protein resides in the mitochondrion matrix. The enzyme catalyses (S)-malate + NAD(+) = oxaloacetate + NADH + H(+). The protein is Malate dehydrogenase, mitochondrial (MMDH) of Citrullus lanatus (Watermelon).